We begin with the raw amino-acid sequence, 357 residues long: Meiotically up-regulated gene 135 protein (357 aa).

This sequence belongs to the UPF0612 family.

Its subcellular location is the nucleus. Its function is as follows. Has a role in meiosis. This chain is Meiotically up-regulated gene 135 protein (mug135), found in Schizosaccharomyces pombe (strain 972 / ATCC 24843) (Fission yeast).